A 104-amino-acid polypeptide reads, in one-letter code: MGMDIGLSHYLTVAAILFTLGTLGIFLNRKNVIVILMSVELILLAVNINLVSFSAFLGNLTGQVFALLVLTVAAAEAAIGLAILVVFYRNRGSIAVEDINAMKG.

The next 3 membrane-spanning stretches (helical) occupy residues Leu-7–Leu-27, Ile-33–Phe-53, and Leu-67–Phe-87.

It belongs to the complex I subunit 4L family. NDH-1 is composed of 14 different subunits. Subunits NuoA, H, J, K, L, M, N constitute the membrane sector of the complex.

It is found in the cell inner membrane. It catalyses the reaction a quinone + NADH + 5 H(+)(in) = a quinol + NAD(+) + 4 H(+)(out). NDH-1 shuttles electrons from NADH, via FMN and iron-sulfur (Fe-S) centers, to quinones in the respiratory chain. The immediate electron acceptor for the enzyme in this species is believed to be ubiquinone. Couples the redox reaction to proton translocation (for every two electrons transferred, four hydrogen ions are translocated across the cytoplasmic membrane), and thus conserves the redox energy in a proton gradient. The protein is NADH-quinone oxidoreductase subunit K of Xanthobacter autotrophicus (strain ATCC BAA-1158 / Py2).